The chain runs to 146 residues: Hemoglobin subunit beta-1/2 (146 aa).

Position 1 is an N-acetylvaline (Val-1). Residues 2–146 enclose the Globin domain; sequence HLTGEEKSGL…VANALAHKYH (145 aa). Position 12 is a phosphothreonine (Thr-12). Lys-59 carries the N6-acetyllysine modification. His-63 lines the heme b pocket. Lys-82 carries the N6-acetyllysine modification. Heme b is bound at residue His-92. Cys-93 carries the post-translational modification S-nitrosocysteine. An N6-acetyllysine modification is found at Lys-144.

Belongs to the globin family. As to quaternary structure, heterotetramer of two alpha chains and two beta chains. Red blood cells.

Its function is as follows. Involved in oxygen transport from the lung to the various peripheral tissues. The polypeptide is Hemoglobin subunit beta-1/2 (HBB) (Physeter macrocephalus (Sperm whale)).